A 473-amino-acid chain; its full sequence is Bifunctional protein HldE (473 aa).

The tract at residues Met-1–Pro-316 is ribokinase. Asn-193–Glu-196 lines the ATP pocket. Residue Asp-262 is part of the active site. Residues Val-342–Gly-473 form a cytidylyltransferase region.

It in the N-terminal section; belongs to the carbohydrate kinase PfkB family. The protein in the C-terminal section; belongs to the cytidylyltransferase family. In terms of assembly, homodimer.

The enzyme catalyses D-glycero-beta-D-manno-heptose 7-phosphate + ATP = D-glycero-beta-D-manno-heptose 1,7-bisphosphate + ADP + H(+). It carries out the reaction D-glycero-beta-D-manno-heptose 1-phosphate + ATP + H(+) = ADP-D-glycero-beta-D-manno-heptose + diphosphate. It participates in nucleotide-sugar biosynthesis; ADP-L-glycero-beta-D-manno-heptose biosynthesis; ADP-L-glycero-beta-D-manno-heptose from D-glycero-beta-D-manno-heptose 7-phosphate: step 1/4. It functions in the pathway nucleotide-sugar biosynthesis; ADP-L-glycero-beta-D-manno-heptose biosynthesis; ADP-L-glycero-beta-D-manno-heptose from D-glycero-beta-D-manno-heptose 7-phosphate: step 3/4. In terms of biological role, catalyzes the phosphorylation of D-glycero-D-manno-heptose 7-phosphate at the C-1 position to selectively form D-glycero-beta-D-manno-heptose-1,7-bisphosphate. Functionally, catalyzes the ADP transfer from ATP to D-glycero-beta-D-manno-heptose 1-phosphate, yielding ADP-D-glycero-beta-D-manno-heptose. This Methylococcus capsulatus (strain ATCC 33009 / NCIMB 11132 / Bath) protein is Bifunctional protein HldE.